A 456-amino-acid chain; its full sequence is Enolase (456 aa).

Gln-164 contributes to the (2R)-2-phosphoglycerate binding site. The active-site Proton donor is Glu-207. 3 residues coordinate Mg(2+): Asp-244, Glu-287, and Asp-314. (2R)-2-phosphoglycerate contacts are provided by Lys-339, Arg-368, Ser-369, and Lys-390. Lys-339 (proton acceptor) is an active-site residue.

It belongs to the enolase family. Component of the RNA degradosome, a multiprotein complex involved in RNA processing and mRNA degradation. Mg(2+) is required as a cofactor.

The protein localises to the cytoplasm. It is found in the secreted. The protein resides in the cell surface. The enzyme catalyses (2R)-2-phosphoglycerate = phosphoenolpyruvate + H2O. The protein operates within carbohydrate degradation; glycolysis; pyruvate from D-glyceraldehyde 3-phosphate: step 4/5. Functionally, catalyzes the reversible conversion of 2-phosphoglycerate (2-PG) into phosphoenolpyruvate (PEP). It is essential for the degradation of carbohydrates via glycolysis. This is Enolase from Francisella tularensis subsp. tularensis (strain FSC 198).